Consider the following 320-residue polypeptide: Ferrochelatase (320 aa).

The Fe cation site is built by His-194 and Glu-275.

The protein belongs to the ferrochelatase family. As to quaternary structure, monomer.

It is found in the cytoplasm. The enzyme catalyses heme b + 2 H(+) = protoporphyrin IX + Fe(2+). Its pathway is porphyrin-containing compound metabolism; protoheme biosynthesis; protoheme from protoporphyrin-IX: step 1/1. Catalyzes the ferrous insertion into protoporphyrin IX. The protein is Ferrochelatase of Shigella flexneri serotype 5b (strain 8401).